The primary structure comprises 174 residues: NADH-ubiquinone oxidoreductase chain 6 (174 aa).

The next 6 membrane-spanning stretches (helical) occupy residues 1–21 (MTYA…GFSS), 24–44 (SPIY…AVIL), 47–67 (GGGY…MVVF), 86–106 (VEVL…VLWV), 111–131 (GVVV…EGEG), and 151–171 (WLVV…IEIA).

Belongs to the complex I subunit 6 family. Core subunit of respiratory chain NADH dehydrogenase (Complex I) which is composed of 45 different subunits.

It is found in the mitochondrion inner membrane. The catalysed reaction is a ubiquinone + NADH + 5 H(+)(in) = a ubiquinol + NAD(+) + 4 H(+)(out). Its function is as follows. Core subunit of the mitochondrial membrane respiratory chain NADH dehydrogenase (Complex I) which catalyzes electron transfer from NADH through the respiratory chain, using ubiquinone as an electron acceptor. Essential for the catalytic activity and assembly of complex I. The polypeptide is NADH-ubiquinone oxidoreductase chain 6 (MT-ND6) (Pongo abelii (Sumatran orangutan)).